A 229-amino-acid chain; its full sequence is Flagellar L-ring protein 1 (229 aa).

Residues 1 to 18 form the signal peptide; sequence MYLRKISAPLMTMLLLNG. The N-palmitoyl cysteine moiety is linked to residue Cys-19. A lipid anchor (S-diacylglycerol cysteine) is attached at Cys-19.

It belongs to the FlgH family. The basal body constitutes a major portion of the flagellar organelle and consists of four rings (L,P,S, and M) mounted on a central rod.

It is found in the cell outer membrane. Its subcellular location is the bacterial flagellum basal body. Its function is as follows. Assembles around the rod to form the L-ring and probably protects the motor/basal body from shearing forces during rotation. The sequence is that of Flagellar L-ring protein 1 (flgH1) from Yersinia pseudotuberculosis serotype I (strain IP32953).